A 184-amino-acid chain; its full sequence is Protein Syd (184 aa).

This sequence belongs to the Syd family.

Its subcellular location is the cell inner membrane. Functionally, interacts with the SecY protein in vivo. May bind preferentially to an uncomplexed state of SecY, thus functioning either as a chelating agent for excess SecY in the cell or as a regulatory factor that negatively controls the translocase function. The protein is Protein Syd of Edwardsiella ictaluri (strain 93-146).